We begin with the raw amino-acid sequence, 159 residues long: Urease accessory protein UreE (159 aa).

This sequence belongs to the UreE family.

The protein localises to the cytoplasm. In terms of biological role, involved in urease metallocenter assembly. Binds nickel. Probably functions as a nickel donor during metallocenter assembly. The chain is Urease accessory protein UreE from Pseudomonas entomophila (strain L48).